A 90-amino-acid polypeptide reads, in one-letter code: Acylphosphatase (90 aa).

One can recognise an Acylphosphatase-like domain in the interval 4–90 (RWRFLIEGSV…TGNDWFDVRT (87 aa)). Residues Arg19 and Asn37 contribute to the active site.

It belongs to the acylphosphatase family.

The catalysed reaction is an acyl phosphate + H2O = a carboxylate + phosphate + H(+). The chain is Acylphosphatase (acyP) from Synechococcus sp. (strain CC9311).